The following is a 77-amino-acid chain: SS18-like protein 2 (77 aa).

The SH2-binding signature appears at 50-53 (YQHV).

This sequence belongs to the SS18 family.

In Homo sapiens (Human), this protein is SS18-like protein 2 (SS18L2).